We begin with the raw amino-acid sequence, 602 residues long: Elongation factor 4 (602 aa).

A tr-type G domain is found at 7–189 (RNIRNFSIIA…AIVQRIPAPQ (183 aa)). GTP-binding positions include 19 to 24 (DHGKST) and 136 to 139 (NKID).

This sequence belongs to the TRAFAC class translation factor GTPase superfamily. Classic translation factor GTPase family. LepA subfamily.

The protein resides in the cell inner membrane. The enzyme catalyses GTP + H2O = GDP + phosphate + H(+). Required for accurate and efficient protein synthesis under certain stress conditions. May act as a fidelity factor of the translation reaction, by catalyzing a one-codon backward translocation of tRNAs on improperly translocated ribosomes. Back-translocation proceeds from a post-translocation (POST) complex to a pre-translocation (PRE) complex, thus giving elongation factor G a second chance to translocate the tRNAs correctly. Binds to ribosomes in a GTP-dependent manner. This Xylella fastidiosa (strain M23) protein is Elongation factor 4.